A 369-amino-acid polypeptide reads, in one-letter code: Maltose/maltodextrin import ATP-binding protein MalK (369 aa).

The ABC transporter domain maps to 4–234; it reads VTLRNVCKAY…PQNRFVAGFI (231 aa). 36–43 is an ATP binding site; it reads GPSGCGKS.

Belongs to the ABC transporter superfamily. Maltooligosaccharide importer (TC 3.A.1.1.1) family. In terms of assembly, the complex is composed of two ATP-binding proteins (MalK), two transmembrane proteins (MalG and MalK) and a solute-binding protein (MalE).

It localises to the cell inner membrane. The catalysed reaction is D-maltose(out) + ATP + H2O = D-maltose(in) + ADP + phosphate + H(+). Part of the ABC transporter complex MalEFGK involved in maltose/maltodextrin import. Responsible for energy coupling to the transport system. The sequence is that of Maltose/maltodextrin import ATP-binding protein MalK from Photobacterium profundum (strain SS9).